The chain runs to 62 residues: Sperm protamine P1 (62 aa).

The tract at residues 1–62 (MARYRHSRSR…RYSRRRRRRY (62 aa)) is disordered.

It belongs to the protamine P1 family. In terms of tissue distribution, testis.

The protein localises to the nucleus. It localises to the chromosome. In terms of biological role, protamines substitute for histones in the chromatin of sperm during the haploid phase of spermatogenesis. They compact sperm DNA into a highly condensed, stable and inactive complex. The sequence is that of Sperm protamine P1 (PRM1) from Thylogale stigmatica (Red-legged pademelon).